Reading from the N-terminus, the 744-residue chain is MANESKCPFHQTAGGGTSNRDWWPDQLNLKILHQHSRKSDPMDPDFDYAKAFKSLDFQALKKDLTALMTDSQDWWPADFGHYGPLFIRMAWHSAGTYRIGDGRGGAGSGQQRFAPLNSWPDNVSLDKARRLLWPIKQKYGNKISWADLIVLTGNVALESMGFKTFGFSGGRADVWEPDEDVYWGSEKVWLGGDTRYGKAEAPGKGDLVAEPAKRPQEQGRNLAGERNLENPLAAVQMGLIYVNPEGPEGNPDPVASGKDIRDTFGRMAMNDEETVALIAGGHAFGKTHGAGPADNVGAEPEAAGLEQQGFGWHNTFGTGKGGDTITSGLEVTWTSTPTKWSNEYLNNLFNFEWELTKSPAGAHQWRPKDGKGANTVPDAHDTTKRHAPSMLTSDLALRFDPIYEPIARRFKDNPDQLADAFARAWYKLIHRDMGPLARYLGPEMPNEELLWQDPLPKAGPQPSEADIAAHKAKVLASGLSVAELVSTAWASASTFRGSDKRGGANGARLRLAPQKDWAANQGLDKVLAALEKIRDEGGNKISLADLIVLAGSAAVEKAAKDAGHAISVPFHPGRVDASQAQTDVESFAVLEPLADGFRNFSKARYSVKAEKLLLDKAQLLTLTAPELTVLVGGLRVLGANHGGSKEGVFTDKPGVLTNDFFRNLLDMGVEWKPTSADNEHFEGRDRKTGAVKWTGSRVDLVFGSHAQLRALSEVYGSGDAAAKFVKDFVAAWVKVMELDRFDLK.

The tract at residues 1-21 (MANESKCPFHQTAGGGTSNRD) is disordered. Residues 91 to 241 (WHSAGTYRIG…LAAVQMGLIY (151 aa)) constitute a cross-link (tryptophyl-tyrosyl-methioninium (Trp-Tyr) (with M-267)). Histidine 92 acts as the Proton acceptor in catalysis. The tryptophyl-tyrosyl-methioninium (Tyr-Met) (with W-91) cross-link spans 241-267 (YVNPEGPEGNPDPVASGKDIRDTFGRM). Residue histidine 282 participates in heme b binding. The segment at 361–387 (GAHQWRPKDGKGANTVPDAHDTTKRHA) is disordered.

The protein belongs to the peroxidase family. Peroxidase/catalase subfamily. In terms of assembly, homodimer or homotetramer. Requires heme b as cofactor. In terms of processing, formation of the three residue Trp-Tyr-Met cross-link is important for the catalase, but not the peroxidase activity of the enzyme.

The catalysed reaction is H2O2 + AH2 = A + 2 H2O. It catalyses the reaction 2 H2O2 = O2 + 2 H2O. In terms of biological role, bifunctional enzyme with both catalase and broad-spectrum peroxidase activity. The polypeptide is Catalase-peroxidase (Pseudomonas entomophila (strain L48)).